Here is a 561-residue protein sequence, read N- to C-terminus: Potassium-transporting ATPase potassium-binding subunit (561 aa).

Transmembrane regions (helical) follow at residues 4-24 (IIMQ…PLGI), 65-85 (AGSV…VLML), 134-154 (GLTV…FAVI), 177-197 (LYIL…QGVV), 253-273 (FTNL…VVMF), 285-305 (AIMT…TISE), 380-400 (GLYG…LLVG), 417-437 (MVCL…AFAV), 484-504 (MVGA…ALYL), and 528-548 (FIGL…LPAL).

This sequence belongs to the KdpA family. The system is composed of three essential subunits: KdpA, KdpB and KdpC.

It localises to the cell membrane. Part of the high-affinity ATP-driven potassium transport (or Kdp) system, which catalyzes the hydrolysis of ATP coupled with the electrogenic transport of potassium into the cytoplasm. This subunit binds the extracellular potassium ions and delivers the ions to the membrane domain of KdpB through an intramembrane tunnel. This is Potassium-transporting ATPase potassium-binding subunit from Listeria welshimeri serovar 6b (strain ATCC 35897 / DSM 20650 / CCUG 15529 / CIP 8149 / NCTC 11857 / SLCC 5334 / V8).